Consider the following 756-residue polypeptide: Disintegrin and metalloproteinase domain-containing protein 5 (756 aa).

Residues 1 to 16 (MFLLLVLLTGLGGMHA) form the signal peptide. Positions 17–142 (DLNPHKTFLQ…AVSGFIHKIY (126 aa)) are excised as a propeptide. At 17 to 698 (DLNPHKTFLQ…GRHAPFQKQR (682 aa)) the chain is on the extracellular side. In terms of domain architecture, Peptidase M12B spans 183–380 (RYIEMHIVVD…NGLTCLQTNP (198 aa)). 4 disulfides stabilise this stretch: Cys-292-Cys-375, Cys-334-Cys-359, Cys-336-Cys-341, and Cys-449-Cys-470. The Disintegrin domain occupies 389–478 (RRICGNGLLE…YCLLDTYVRD (90 aa)). An N-linked (GlcNAc...) asparagine glycan is attached at Asn-559. The EGF-like domain occupies 630 to 664 (DFETCEASIECSGHGICNNFNHCHCEKGYNPPHCK). 3 disulfide bridges follow: Cys-634–Cys-646, Cys-640–Cys-652, and Cys-654–Cys-663. The chain crosses the membrane as a helical span at residues 699–719 (FQLIFYISLPVLIITTAILIK). Residues 720–756 (RKKLRELCYRGETESESSVSQESSSNSKSSLSESTSL) lie on the Cytoplasmic side of the membrane. A disordered region spans residues 731-756 (ETESESSVSQESSSNSKSSLSESTSL). Positions 735 to 756 (ESSVSQESSSNSKSSLSESTSL) are enriched in low complexity.

As to quaternary structure, interacts with TEX101. Post-translationally, subject to proteolytic processing during epididymal transit of spermatozoa. As to expression, detected in testis (at protein level). Detected in adult and prepubertal testis. Detected at very low levels in heart, kidney, brain, muscle ovary and uterus.

The protein resides in the membrane. In terms of biological role, this is a non catalytic metalloprotease-like protein. May play a role in sperm-egg fusion. In Macaca fascicularis (Crab-eating macaque), this protein is Disintegrin and metalloproteinase domain-containing protein 5 (ADAM5).